The chain runs to 118 residues: Diacylglycerol kinase (118 aa).

E28 is a binding site for a divalent metal cation. 2 helical membrane-spanning segments follow: residues 29-49 (TAFR…FFLG) and 55-75 (IILM…NSAV). E69 serves as the catalytic Proton acceptor. E76 contributes to the a divalent metal cation binding site. The chain crosses the membrane as a helical span at residues 98–118 (SASVFIALCIVGIVWGGILFF).

It belongs to the bacterial diacylglycerol kinase family. Mg(2+) is required as a cofactor.

Its subcellular location is the cell inner membrane. The enzyme catalyses a 1,2-diacyl-sn-glycerol + ATP = a 1,2-diacyl-sn-glycero-3-phosphate + ADP + H(+). Functionally, catalyzes the ATP-dependent phosphorylation of sn-l,2-diacylglycerol (DAG) to phosphatidic acid. Involved in the recycling of diacylglycerol produced as a by-product during membrane-derived oligosaccharide (MDO) biosynthesis. The polypeptide is Diacylglycerol kinase (dgkA) (Haemophilus influenzae (strain ATCC 51907 / DSM 11121 / KW20 / Rd)).